Here is a 487-residue protein sequence, read N- to C-terminus: Neuronal immunoglobulin domain-containing protein rig-3 (487 aa).

An N-terminal signal peptide occupies residues 1-23; that stretch reads MGRLLAKMLFPLAMCLFVSAVSA. 2 Ig-like domains span residues 34–139 and 247–354; these read PIVI…KTIK and PEFE…PKVT. Disulfide bonds link Cys-61/Cys-124 and Cys-271/Cys-327. Asp-466 carries GPI-anchor amidated aspartate lipidation. The propeptide at 467–487 is removed in mature form; the sequence is SASDSKFPLALATLFFVCLFI.

In terms of tissue distribution, expressed in the cholinergic motor neurons AS, VA and DA in the ventral nerve cord and in the mechanosensory ALM neurons in the midbody.

Its subcellular location is the cell projection. It is found in the axon. The protein resides in the synapse. It localises to the cell membrane. Its function is as follows. Cell surface protein which plays a role in the plasticity of cholinergic synapses at neuromuscular junctions and in the polarity of the mechanosensory neuron ALM, possibly by antagonizing Wnt signaling. The chain is Neuronal immunoglobulin domain-containing protein rig-3 from Caenorhabditis elegans.